Here is a 339-residue protein sequence, read N- to C-terminus: Dihydroorotate dehydrogenase (quinone) (339 aa).

FMN contacts are provided by residues 61-65 (AGLDK) and Thr-85. Substrate is bound at residue Lys-65. 110–114 (NRMGF) contacts substrate. FMN is bound by residues Asn-138 and Asn-171. Position 171 (Asn-171) interacts with substrate. Ser-174 serves as the catalytic Nucleophile. Asn-176 contacts substrate. Residues Lys-216 and Thr-244 each coordinate FMN. 245–246 (NT) is a binding site for substrate. Residues Gly-267, Gly-296, and 317–318 (YS) contribute to the FMN site.

Belongs to the dihydroorotate dehydrogenase family. Type 2 subfamily. As to quaternary structure, monomer. FMN serves as cofactor.

Its subcellular location is the cell membrane. It carries out the reaction (S)-dihydroorotate + a quinone = orotate + a quinol. It participates in pyrimidine metabolism; UMP biosynthesis via de novo pathway; orotate from (S)-dihydroorotate (quinone route): step 1/1. In terms of biological role, catalyzes the conversion of dihydroorotate to orotate with quinone as electron acceptor. This chain is Dihydroorotate dehydrogenase (quinone), found in Saccharophagus degradans (strain 2-40 / ATCC 43961 / DSM 17024).